The sequence spans 101 residues: Phosphoribosyl-AMP cyclohydrolase (101 aa).

Mg(2+) is bound at residue Asp71. Residue Cys72 coordinates Zn(2+). The Mg(2+) site is built by Asp73 and Asp75. Zn(2+) contacts are provided by Cys88 and Cys95.

Belongs to the PRA-CH family. Homodimer. The cofactor is Mg(2+). Requires Zn(2+) as cofactor.

It localises to the cytoplasm. The enzyme catalyses 1-(5-phospho-beta-D-ribosyl)-5'-AMP + H2O = 1-(5-phospho-beta-D-ribosyl)-5-[(5-phospho-beta-D-ribosylamino)methylideneamino]imidazole-4-carboxamide. The protein operates within amino-acid biosynthesis; L-histidine biosynthesis; L-histidine from 5-phospho-alpha-D-ribose 1-diphosphate: step 3/9. Its function is as follows. Catalyzes the hydrolysis of the adenine ring of phosphoribosyl-AMP. The protein is Phosphoribosyl-AMP cyclohydrolase of Bacillus cereus (strain 03BB102).